The sequence spans 247 residues: Probable proteasome subunit alpha type-5 (247 aa).

Position 55 is a phosphothreonine (threonine 55).

It belongs to the peptidase T1A family. The 26S proteasome consists of a 20S proteasome core and two 19S regulatory subunits. The 20S proteasome core is composed of 28 subunits that are arranged in four stacked rings, resulting in a barrel-shaped structure. The two end rings are each formed by seven alpha subunits, and the two central rings are each formed by seven beta subunits. The catalytic chamber with the active sites is on the inside of the barrel.

Its subcellular location is the cytoplasm. It is found in the nucleus. Its function is as follows. The proteasome is a multicatalytic proteinase complex which is characterized by its ability to cleave peptides with Arg, Phe, Tyr, Leu, and Glu adjacent to the leaving group at neutral or slightly basic pH. The proteasome has an ATP-dependent proteolytic activity. The protein is Probable proteasome subunit alpha type-5 (pup2) of Schizosaccharomyces pombe (strain 972 / ATCC 24843) (Fission yeast).